The following is a 73-amino-acid chain: Biotin/lipoyl attachment protein (73 aa).

A Biotinyl-binding domain is found at 2–69 (TVSIQMAGNL…NEGDVLLELS (68 aa)). K35 is subject to N6-biotinyllysine; alternate. K35 carries the post-translational modification N6-lipoyllysine; alternate.

Can be both biotinylated and lipoylated on Lys-35 upon overexpression in E.coli depending on the growth medium; the nature of the modification in situ in B.subtilis is unknown.

The sequence is that of Biotin/lipoyl attachment protein (yngHB) from Bacillus subtilis (strain 168).